Reading from the N-terminus, the 245-residue chain is Gas vesicle protein F (245 aa).

The protein belongs to the gas vesicle GvpF/GvpL family. As to quaternary structure, binds GvpA.

It is found in the gas vesicle. A minor component of the gas vesicle, may be involved in preventing GvpA aggregation during gas vesicle nucleation. Gas vesicles (GV) are hollow, gas filled proteinaceous nanostructures. During planktonic growth they allow positioning of the organism at a favorable depth for light or nutrient acquisition. The sequence is that of Gas vesicle protein F from Dolichospermum flosaquae (Anabaena flos-aquae).